Here is a 142-residue protein sequence, read N- to C-terminus: Small ribosomal subunit protein uS9 (142 aa).

Residues Lys117–Arg142 are disordered. The segment covering Thr123–Arg142 has biased composition (basic residues).

Belongs to the universal ribosomal protein uS9 family.

This Pyrobaculum aerophilum (strain ATCC 51768 / DSM 7523 / JCM 9630 / CIP 104966 / NBRC 100827 / IM2) protein is Small ribosomal subunit protein uS9.